The sequence spans 337 residues: RAD51-associated protein 1 (337 aa).

Disordered stretches follow at residues 1 to 69 and 88 to 337; these read MVRP…PPKK and LSVK…SQVR. S19 and S23 each carry phosphoserine. The span at 28–38 shows a compositional bias: polar residues; it reads ISSSTPVNKSK. The tract at residues 32-50 is interaction with DNA; that stretch reads TPVNKSKTVPKVLKQDKPK. Residues 44–69 show a composition bias toward basic and acidic residues; it reads LKQDKPKPNLKNLQKEEVLPTEPPKK. A phosphoserine mark is found at S103 and S107. Residues 105–118 are compositionally biased toward basic and acidic residues; the sequence is EKSTDKQGKEKTEN. The SIM motif signature appears at 138–143; that stretch reads LDKITE. Residues 190–205 show a composition bias toward acidic residues; it reads SESDPDFDESKESDED. Residues 225 to 286 are interaction with DNA; the sequence is GEKKERKSKP…PSAESKRPKW (62 aa). Residue K251 forms a Glycyl lysine isopeptide (Lys-Gly) (interchain with G-Cter in SUMO; alternate) linkage. K251 participates in a covalent cross-link: Glycyl lysine isopeptide (Lys-Gly) (interchain with G-Cter in ubiquitin; alternate). The short motif at 286–289 is the WVPP motif element; it reads WVPP. The segment covering 290–304 has biased composition (low complexity); it reads AASGSRNSSSNALAG. Residues 295–334 are interaction with RAD51; sequence RNSSSNALAGTPAKSPSQSLRLGLSRLAPVKRLHPSATSS. S309 is modified (phosphoserine).

As to quaternary structure, monomer; elongated monodisperse monomer. Interacts (via C-terminal region) with RAD51; the interaction is direct. Interacts (via SIM motif) with WDR48/UAF1; WDR48/UAF1 and RAD51AP1 cooperate together to stimulate RAD51-mediated homologous recombination (HR). Interacts (via WVPP motif) with DMC1; the interaction is direct. Interacts with PALB2. Interacts with RAD52. In terms of processing, sumoylation with SUMO2/3 by NSMCE2/MMS21 promotes stabilization, possibly by preventing ubiquitination. Most abundantly expressed in testis. Also expressed in spleen, thymus and bone marrow. Not detected in heart, kidney or liver.

It is found in the chromosome. Its subcellular location is the nucleus. The protein localises to the telomere. In terms of biological role, structure-specific DNA-binding protein involved in DNA repair by promoting RAD51-mediated homologous recombination. Acts by stimulating D-Loop formation by RAD51: specifically enhances joint molecule formation through its structure-specific DNA interaction and its interaction with RAD51. Binds single-stranded DNA (ssDNA), double-stranded DNA (dsDNA) and secondary DNA structures, such as D-loop structures: has a strong preference for branched-DNA structures that are obligatory intermediates during joint molecule formation. Cooperates with WDR48/UAF1 to stimulate RAD51-mediated homologous recombination: both WDR48/UAF1 and RAD51AP1 have coordinated role in DNA-binding during homologous recombination and DNA repair. WDR48/UAF1 and RAD51AP1 also have a coordinated role in DNA-binding to promote USP1-mediated deubiquitination of FANCD2. Also involved in meiosis by promoting DMC1-mediated homologous meiotic recombination. The protein is RAD51-associated protein 1 of Mus musculus (Mouse).